The chain runs to 1049 residues: Carbamoyl phosphate synthase large chain (1049 aa).

The tract at residues 1–399 (MRESVRKVLV…SLQKAVRMLD (399 aa)) is carboxyphosphate synthetic domain. ATP-binding residues include arginine 127, arginine 167, glycine 173, glycine 174, lysine 206, leucine 208, glutamate 213, glycine 239, valine 240, histidine 241, glutamine 282, and glutamate 296. The region spanning 131 to 325 (RETMINVGLP…LAYVSAKLAL (195 aa)) is the ATP-grasp 1 domain. Mg(2+) contacts are provided by glutamine 282, glutamate 296, and asparagine 298. Residues glutamine 282, glutamate 296, and asparagine 298 each contribute to the Mn(2+) site. Positions 400–548 (IGEPGVVGGK…LTYNGTEDDI (149 aa)) are oligomerization domain. Positions 549-930 (EFSEAGNKLL…LKSWLSSSPN (382 aa)) are carbamoyl phosphate synthetic domain. Residues 674 to 864 (SKLLDKLGIK…IISLALDGIL (191 aa)) enclose the ATP-grasp 2 domain. Residues arginine 710, lysine 749, leucine 751, glutamate 756, glycine 780, valine 781, histidine 782, serine 783, glutamine 823, and glutamate 835 each coordinate ATP. Positions 823, 835, and 837 each coordinate Mg(2+). Mn(2+) is bound by residues glutamine 823, glutamate 835, and asparagine 837. The 120-residue stretch at 930 to 1049 (NKIPNKEGIA…YEISEYGAGI (120 aa)) folds into the MGS-like domain. The interval 931-1049 (KIPNKEGIAL…YEISEYGAGI (119 aa)) is allosteric domain.

It belongs to the CarB family. In terms of assembly, composed of two chains; the small (or glutamine) chain promotes the hydrolysis of glutamine to ammonia, which is used by the large (or ammonia) chain to synthesize carbamoyl phosphate. Tetramer of heterodimers (alpha,beta)4. The cofactor is Mg(2+). Requires Mn(2+) as cofactor.

The enzyme catalyses hydrogencarbonate + L-glutamine + 2 ATP + H2O = carbamoyl phosphate + L-glutamate + 2 ADP + phosphate + 2 H(+). It carries out the reaction hydrogencarbonate + NH4(+) + 2 ATP = carbamoyl phosphate + 2 ADP + phosphate + 2 H(+). It functions in the pathway amino-acid biosynthesis; L-arginine biosynthesis; carbamoyl phosphate from bicarbonate: step 1/1. The protein operates within pyrimidine metabolism; UMP biosynthesis via de novo pathway; (S)-dihydroorotate from bicarbonate: step 1/3. Its function is as follows. Large subunit of the glutamine-dependent carbamoyl phosphate synthetase (CPSase). CPSase catalyzes the formation of carbamoyl phosphate from the ammonia moiety of glutamine, carbonate, and phosphate donated by ATP, constituting the first step of 2 biosynthetic pathways, one leading to arginine and/or urea and the other to pyrimidine nucleotides. The large subunit (synthetase) binds the substrates ammonia (free or transferred from glutamine from the small subunit), hydrogencarbonate and ATP and carries out an ATP-coupled ligase reaction, activating hydrogencarbonate by forming carboxy phosphate which reacts with ammonia to form carbamoyl phosphate. The chain is Carbamoyl phosphate synthase large chain from Sulfurisphaera tokodaii (strain DSM 16993 / JCM 10545 / NBRC 100140 / 7) (Sulfolobus tokodaii).